The following is a 274-amino-acid chain: SIMKMDGSQQEENLDVISTGSLGVDLALGVGGLPRGRVVEIFGPESSGKTTLCLEAIAQCQKTGGICAFIDAEHAFDPVYARKLGVKVEELYLSQPDTGEQALEICDTLVRSGGVDMVVVDSVAALVPKAEIEGEMGDSHVGLQARLMSQALRKLTGHIKRTNTLVVFINQIRMKIGVMFGSPETTTGGNALKFYASVRLDIRRTGQIKKGDDVIGNETKVKVIKNKVAPPFRQAEFDILYGEGVSWEGELIDLGVKYDIVEKSGAWYSYNGSK.

Position 43-50 (43-50) interacts with ATP; that stretch reads GPESSGKT.

The protein belongs to the RecA family.

It is found in the cytoplasm. Functionally, can catalyze the hydrolysis of ATP in the presence of single-stranded DNA, the ATP-dependent uptake of single-stranded DNA by duplex DNA, and the ATP-dependent hybridization of homologous single-stranded DNAs. It interacts with LexA causing its activation and leading to its autocatalytic cleavage. The protein is Protein RecA of Neisseria pharyngis.